The chain runs to 254 residues: uncharacterized protein (254 aa).

Positions P60 to T161 are disordered. Low complexity-rich tracts occupy residues P63–P77 and T89–S146.

This is an uncharacterized protein from Caenorhabditis elegans.